Reading from the N-terminus, the 23-residue chain is Basic phospholipase A2 CTs-G6 (23 aa).

Ca(2+) is required as a cofactor. In terms of processing, contains 7 disulfide bonds. Expressed by the venom gland.

Its subcellular location is the secreted. The enzyme catalyses a 1,2-diacyl-sn-glycero-3-phosphocholine + H2O = a 1-acyl-sn-glycero-3-phosphocholine + a fatty acid + H(+). Functionally, snake venom phospholipase A2 (PLA2) that induces local edema a few hours after injection (5-10 ug) in the hind paw. PLA2 catalyzes the calcium-dependent hydrolysis of the 2-acyl groups in 3-sn-phosphoglycerides. In Trimeresurus stejnegeri (Chinese green tree viper), this protein is Basic phospholipase A2 CTs-G6.